Consider the following 1025-residue polypeptide: Retinoblastoma-related protein (1025 aa).

A disordered region spans residues 1 to 20 (MEDHPPKPSIPTADASLSNH). The domain A stretch occupies residues 422–623 (TPVTTAMTTA…EKGSSMYNSL (202 aa)). A pocket region spans residues 422–875 (TPVTTAMTTA…NEIFIPAVKP (454 aa)). Positions 624–744 (TVARPALSAE…PGAGGETCAE (121 aa)) are spacer. The segment at 745–875 (TAINVFFSKI…NEIFIPAVKP (131 aa)) is domain B.

The protein belongs to the retinoblastoma protein (RB) family.

It is found in the nucleus. Regulator of biological processes that recruits a histone deacetylase to control gene transcription. May play a role in the entry into mitosis, negatively regulating the cell proliferation. Formation of stable complexes with geminiviridae replication-associated proteins may create a cellular environment which favors viral DNA replication. The protein is Retinoblastoma-related protein (pRB) of Camellia sinensis (Tea plant).